The primary structure comprises 338 residues: Biotin synthase (338 aa).

The 228-residue stretch at 63-290 (NGVQLSTLLS…RAKVRLSAGR (228 aa)) folds into the Radical SAM core domain. Cys-78, Cys-82, and Cys-85 together coordinate [4Fe-4S] cluster. The [2Fe-2S] cluster site is built by Cys-122, Cys-153, Cys-213, and Arg-285.

Belongs to the radical SAM superfamily. Biotin synthase family. In terms of assembly, homodimer. Requires [4Fe-4S] cluster as cofactor. The cofactor is [2Fe-2S] cluster.

The catalysed reaction is (4R,5S)-dethiobiotin + (sulfur carrier)-SH + 2 reduced [2Fe-2S]-[ferredoxin] + 2 S-adenosyl-L-methionine = (sulfur carrier)-H + biotin + 2 5'-deoxyadenosine + 2 L-methionine + 2 oxidized [2Fe-2S]-[ferredoxin]. The protein operates within cofactor biosynthesis; biotin biosynthesis; biotin from 7,8-diaminononanoate: step 2/2. Functionally, catalyzes the conversion of dethiobiotin (DTB) to biotin by the insertion of a sulfur atom into dethiobiotin via a radical-based mechanism. The chain is Biotin synthase from Nitrosomonas eutropha (strain DSM 101675 / C91 / Nm57).